Reading from the N-terminus, the 106-residue chain is Replication restart protein PriB (106 aa).

In terms of domain architecture, SSB spans 4 to 103 (TNRLVLSGTV…LHAEQIEFID (100 aa)).

This sequence belongs to the PriB family. Homodimer. Interacts with PriA and DnaT. Component of the replication restart primosome. Primosome assembly occurs via a 'hand-off' mechanism. PriA binds to replication forks, subsequently PriB then DnaT bind; DnaT then displaces ssDNA to generate the helicase loading substrate.

Its function is as follows. Involved in the restart of stalled replication forks, which reloads the replicative helicase on sites other than the origin of replication; the PriA-PriB pathway is the major replication restart pathway. During primosome assembly it facilitates complex formation between PriA and DnaT on DNA; stabilizes PriA on DNA. Stimulates the DNA unwinding activity of PriA helicase. The polypeptide is Replication restart protein PriB (Yersinia enterocolitica serotype O:8 / biotype 1B (strain NCTC 13174 / 8081)).